A 545-amino-acid chain; its full sequence is Chaperonin GroEL (545 aa).

Residues 30-33 (TLGP), Lys51, 87-91 (DGTTT), Gly415, and Asp495 contribute to the ATP site.

The protein belongs to the chaperonin (HSP60) family. In terms of assembly, forms a cylinder of 14 subunits composed of two heptameric rings stacked back-to-back. Interacts with the co-chaperonin GroES.

The protein resides in the cytoplasm. The catalysed reaction is ATP + H2O + a folded polypeptide = ADP + phosphate + an unfolded polypeptide.. Functionally, together with its co-chaperonin GroES, plays an essential role in assisting protein folding. The GroEL-GroES system forms a nano-cage that allows encapsulation of the non-native substrate proteins and provides a physical environment optimized to promote and accelerate protein folding. The sequence is that of Chaperonin GroEL from Shewanella sp. (strain W3-18-1).